The chain runs to 232 residues: Orotidine 5'-phosphate decarboxylase (232 aa).

Residues Asp11, Lys33, 60-69 (DLKFHDIPTT), Thr120, Arg181, Gln191, Gly211, and Arg212 each bind substrate. The Proton donor role is filled by Lys62.

It belongs to the OMP decarboxylase family. Type 1 subfamily. As to quaternary structure, homodimer.

The enzyme catalyses orotidine 5'-phosphate + H(+) = UMP + CO2. It participates in pyrimidine metabolism; UMP biosynthesis via de novo pathway; UMP from orotate: step 2/2. Catalyzes the decarboxylation of orotidine 5'-monophosphate (OMP) to uridine 5'-monophosphate (UMP). The polypeptide is Orotidine 5'-phosphate decarboxylase (Tolumonas auensis (strain DSM 9187 / NBRC 110442 / TA 4)).